The primary structure comprises 177 residues: Large ribosomal subunit protein uL10 (177 aa).

Belongs to the universal ribosomal protein uL10 family. In terms of assembly, part of the ribosomal stalk of the 50S ribosomal subunit. The N-terminus interacts with L11 and the large rRNA to form the base of the stalk. The C-terminus forms an elongated spine to which L12 dimers bind in a sequential fashion forming a multimeric L10(L12)X complex.

Its function is as follows. Forms part of the ribosomal stalk, playing a central role in the interaction of the ribosome with GTP-bound translation factors. The polypeptide is Large ribosomal subunit protein uL10 (Leptospira interrogans serogroup Icterohaemorrhagiae serovar copenhageni (strain Fiocruz L1-130)).